The following is a 156-amino-acid chain: Transcriptional regulator MraZ (156 aa).

SpoVT-AbrB domains follow at residues 7–54 (NIEV…PESV) and 84–127 (VEVV…AKER).

The protein belongs to the MraZ family. Forms oligomers.

Its subcellular location is the cytoplasm. The protein resides in the nucleoid. This Bacteroides thetaiotaomicron (strain ATCC 29148 / DSM 2079 / JCM 5827 / CCUG 10774 / NCTC 10582 / VPI-5482 / E50) protein is Transcriptional regulator MraZ.